We begin with the raw amino-acid sequence, 296 residues long: Non-selective voltage-gated ion channel VDAC2 (296 aa).

Residue lysine 25 participates in ATP binding. A Glycyl lysine isopeptide (Lys-Gly) (interchain with G-Cter in ubiquitin) cross-link involves residue lysine 25. At serine 26 the chain carries Phosphoserine. Lysine 33 contributes to the ATP binding site. Lysine 33 carries the N6-acetyllysine; alternate modification. At lysine 33 the chain carries N6-succinyllysine; alternate. A Glycyl lysine isopeptide (Lys-Gly) (interchain with G-Cter in ubiquitin); alternate cross-link involves residue lysine 33. 2 beta stranded membrane passes run 39–48 (LVKLDVKTKS) and 52–60 (VEFTTSGSS). Residues lysine 66 and lysine 74 each participate in a glycyl lysine isopeptide (Lys-Gly) (interchain with G-Cter in ubiquitin) cross-link. A beta stranded membrane pass occupies residues 67–77 (VNGSLETKYKW). A Phosphotyrosine modification is found at tyrosine 80. Beta stranded transmembrane passes span 82–89 (LTFTEKWN), 93–102 (TLGTEIAIED), and 108–117 (LKLTFDTTFS). Threonine 120 is subject to Phosphothreonine. Lysine 122 carries the N6-acetyllysine; alternate modification. A Glycyl lysine isopeptide (Lys-Gly) (interchain with G-Cter in ubiquitin); alternate cross-link involves residue lysine 122. Lysine 123 is covalently cross-linked (Glycyl lysine isopeptide (Lys-Gly) (interchain with G-Cter in ubiquitin)). Beta stranded transmembrane passes span 124 to 133 (SGKIKSAYKR), 136 to 143 (LNLGCDVD), 150 to 158 (AIHGSAVFG), and 163 to 171 (LAGYQMTFD). Residue lysine 174 forms a Glycyl lysine isopeptide (Lys-Gly) (interchain with G-Cter in ubiquitin) linkage. 6 beta stranded membrane-spanning segments follow: residues 176–188 (KLTR…GYKT), 191–198 (FQLHTNVN), 202–211 (EFGGSIYQKV), 215–224 (LETAVNLAWT), 231–240 (RFGIAAKYKL), and 244–251 (ASISAKVN). Residue serine 206 is modified to Phosphoserine. Serine 253 carries the phosphoserine modification. NAD(+) is bound by residues 255–257 (LVG) and 273–277 (SALID). 2 consecutive transmembrane segments (beta stranded) span residues 255–264 (LVGVGYTQTL) and 267–276 (GVKLTLSALI). An N6-acetyllysine; alternate modification is found at lysine 279. Residue lysine 279 forms a Glycyl lysine isopeptide (Lys-Gly) (interchain with G-Cter in ubiquitin); alternate linkage. The beta stranded transmembrane segment at 286–295 (HKLGLGLELE) threads the bilayer. Residue lysine 287 forms a Glycyl lysine isopeptide (Lys-Gly) (interchain with G-Cter in ubiquitin) linkage.

Belongs to the eukaryotic mitochondrial porin family. Monomer, homodimer and higher order oligomers; formation of higher order structures is necessary for scramblase activity. Post-translationally, ubiquitinated by PRKN during mitophagy, leading to its degradation and enhancement of mitophagy. Deubiquitinated by USP30.

The protein resides in the mitochondrion outer membrane. It is found in the membrane. The enzyme catalyses chloride(in) = chloride(out). It carries out the reaction K(+)(in) = K(+)(out). It catalyses the reaction a 1,2-diacyl-sn-glycero-3-phospho-L-serine(in) = a 1,2-diacyl-sn-glycero-3-phospho-L-serine(out). The catalysed reaction is a 1,2-diacyl-sn-glycero-3-phosphocholine(in) = a 1,2-diacyl-sn-glycero-3-phosphocholine(out). The enzyme catalyses a 1,2-diacyl-sn-glycero-3-phospho-(1D-myo-inositol)(in) = a 1,2-diacyl-sn-glycero-3-phospho-(1D-myo-inositol)(out). In terms of biological role, non-selective voltage-gated ion channel that mediates the transport of anions and cations through the mitochondrion outer membrane and plasma membrane. The channel adopts an open conformation at zero mV and a closed conformation at both positive and negative potentials. There are two populations of channels; the main that functions in a lower open-state conductance with lower ion selectivity, that switch, in a voltage-dependent manner, from the open to a low-conducting 'closed' state and the other that has a normal ion selectivity in the typical high conductance, 'open' state. Binds various lipids, including the sphingolipid ceramide, the phospholipid phosphatidylcholine, and the sterols cholesterol and oxysterol. Binding of ceramide promotes the mitochondrial outer membrane permeabilization (MOMP) apoptotic pathway. Its function is as follows. Catalyzes the scrambling of phospholipids across the outer mitochondrial membrane; the mechanism is unrelated to channel activity and is capable of translocating both anionic and zwitterionic phospholipids. This is Non-selective voltage-gated ion channel VDAC2 from Meleagris gallopavo (Wild turkey).